The primary structure comprises 67 residues: PGPDVKCVCCQDGKECPCKGGECCITGSCCKEGDGLCCGKCSNAACKCADGCKCGSGCSCTLGNCTC.

This sequence belongs to the metallothionein superfamily. Type 4 family.

Functionally, metallothioneins have a high content of cysteine residues that bind various heavy metals. The chain is Metallothionein-A from Sphaerechinus granularis (Purple sea urchin).